Consider the following 480-residue polypeptide: MNGEEEFFDAVTGFDSDNSSGEFSEANQKVTGMIDLDTSKNNRIGKTGERPSQENGIQKHRTSLPAPMFSRSDFSVWTILKKCVGLELSKITMPIAFNEPLSFLQRITEYMEHVYLIHRASCQPQPLERMQSVAAFAVSAVASQWERTGKPFNPLLGETYELIREDLGFRFISEQVSHHPPISAFHSEGLNHDFLFHGSIYPKLKFWGKSVEAEPRGTITLELLKHNEAYTWTNPTCCVHNVIIGKLWIEQYGTVEILNHRTGHKCVLHFKPCGLFGKELHKVEGHIQDKNKKKLFMIYGKWTECLWGIDPVSYESFKKQERRGDHLRKAKLDEDSGKADSDVADDVPVAQETVQVIPGSKLLWRINTRPPNSAQMYNFTSFTVSLNELETGMEKTLPPTDCRLRPDIRGMENGNMDLASQEKERLEEKQREARRERAKEEAEWQTRWFYPGNNPYTGTPDWLYAGDYFERNFSDCPDIY.

The segment at 1–60 is disordered; that stretch reads MNGEEEFFDAVTGFDSDNSSGEFSEANQKVTGMIDLDTSKNNRIGKTGERPSQENGIQKH. Over residues 15–30 the composition is skewed to polar residues; sequence DSDNSSGEFSEANQKV. Residues serine 19 and serine 20 each carry the phosphoserine modification. Residues lysine 90, 178–179, and 427–431 contribute to the a 1,2-diacyl-sn-glycero-3-phospho-(1D-myo-inositol-4,5-bisphosphate) site; these read HH and EEKQR.

Belongs to the OSBP family. In terms of assembly, monomer. Homotetramer; phosphatidylinositol-4,5-bisphosphate binding promotes formation of stable tetramers. Interacts with DIAPH1. As to expression, widely expressed.

It localises to the cytoplasm. It is found in the cytosol. The protein resides in the lipid droplet. The protein localises to the cell membrane. In terms of biological role, intracellular transport protein that binds sterols and phospholipids and mediates lipid transport between intracellular compartments. Increases plasma membrane cholesterol levels and decreases phosphatidylinositol-4,5-bisphosphate levels in the cell membrane. Binds phosphoinositides, such as phosphatidylinositol-4,5-bisphosphate. Exhibits strong binding to phosphatidic acid and weak binding to phosphatidylinositol 3-phosphate. Binds cholesterol, dehydroergosterol, 22(R)-hydroxycholesterol and 25-hydroxycholesterol (in vitro). This Homo sapiens (Human) protein is Oxysterol-binding protein-related protein 2 (OSBPL2).